Here is a 236-residue protein sequence, read N- to C-terminus: Dual specificity protein phosphatase 15 (236 aa).

Glycine 2 is lipidated: N-myristoyl glycine. In terms of domain architecture, Tyrosine-protein phosphatase spans 4-144; sequence GMTKVLPGLY…LEEFGWANSQ (141 aa). The active-site Phosphocysteine intermediate is cysteine 88. Residues 178–213 are disordered; it reads GPGTSAPSATTASSAASEGTLQRLVPRSPRESHRPL. Over residues 181 to 194 the composition is skewed to low complexity; that stretch reads TSAPSATTASSAAS.

It belongs to the protein-tyrosine phosphatase family. Non-receptor class dual specificity subfamily.

It is found in the cell membrane. The catalysed reaction is O-phospho-L-tyrosyl-[protein] + H2O = L-tyrosyl-[protein] + phosphate. The enzyme catalyses O-phospho-L-seryl-[protein] + H2O = L-seryl-[protein] + phosphate. It catalyses the reaction O-phospho-L-threonyl-[protein] + H2O = L-threonyl-[protein] + phosphate. Its function is as follows. May play a role in the regulation of oligodendrocyte differentiation. May play a role in the regulation of myelin formation. Involved in the regulation of Erk1/2 phosphorylation in Schwann cells; the signaling may be linked to the regulation of myelination. May dephosphorylate MAPK13, ATF2, ERBB3, PDGFRB and SNX6. This is Dual specificity protein phosphatase 15 (Dusp15) from Rattus norvegicus (Rat).